The sequence spans 104 residues: Large ribosomal subunit protein uL24 (104 aa).

This sequence belongs to the universal ribosomal protein uL24 family. As to quaternary structure, part of the 50S ribosomal subunit.

Its function is as follows. One of two assembly initiator proteins, it binds directly to the 5'-end of the 23S rRNA, where it nucleates assembly of the 50S subunit. In terms of biological role, one of the proteins that surrounds the polypeptide exit tunnel on the outside of the subunit. The chain is Large ribosomal subunit protein uL24 from Salmonella paratyphi A (strain ATCC 9150 / SARB42).